Consider the following 663-residue polypeptide: Probable peptidyl-glycine alpha-amidating monooxygenase pamn-1 (663 aa).

The first 21 residues, Met-1–Ala-21, serve as a signal peptide directing secretion. Positions Met-1–Pro-300 are peptidylglycine alpha-hydroxylating monooxygenase. Cu(2+)-binding residues include His-75 and His-76. A disulfide bridge links Cys-82 with Cys-98. His-142 provides a ligand contact to Cu(2+). Asn-191 is a glycosylation site (N-linked (GlcNAc...) asparagine). Intrachain disulfides connect Cys-194-Cys-305 and Cys-261-Cys-283. Positions 210 and 212 each coordinate Cu(2+). N-linked (GlcNAc...) asparagine glycosylation is present at Asn-269. Met-282 is a Cu(2+) binding site. A peptidyl-alpha-hydroxyglycine alpha-amidating lyase region spans residues Gln-301 to Asn-663. Arg-376 contacts a protein. A glycan (N-linked (GlcNAc...) asparagine) is linked at Asn-411. 4 NHL repeats span residues Asn-411 to Glu-454, Ser-464 to Asn-507, Ile-511 to Gln-554, and Phe-626 to Phe-656. A disulfide bridge links Cys-478 with Cys-497. Residues Tyr-496 and Arg-543 each coordinate a protein.

It in the C-terminal section; belongs to the peptidyl-alpha-hydroxyglycine alpha-amidating lyase family. The protein in the N-terminal section; belongs to the copper type II ascorbate-dependent monooxygenase family. As to quaternary structure, monomer. Zn(2+) serves as cofactor. Cu(2+) is required as a cofactor.

It is found in the secreted. The catalysed reaction is a [peptide]-C-terminal glycine + 2 L-ascorbate + O2 = a [peptide]-C-terminal (2S)-2-hydroxyglycine + 2 monodehydro-L-ascorbate radical + H2O. It carries out the reaction a [peptide]-C-terminal (2S)-2-hydroxyglycine = a [peptide]-C-terminal amide + glyoxylate. Its function is as follows. Probable bifunctional enzyme that catalyzes 2 sequential steps in C-terminal alpha-amidation of peptides. The monooxygenase part produces an unstable peptidyl(2-hydroxyglycine) intermediate that is dismutated to glyoxylate and the corresponding desglycine peptide amide by the lyase part. C-terminal amidation of peptides such as neuropeptides is essential for full biological activity. The protein is Probable peptidyl-glycine alpha-amidating monooxygenase pamn-1 of Caenorhabditis elegans.